A 299-amino-acid polypeptide reads, in one-letter code: Protein translocase subunit SecF (299 aa).

6 helical membrane passes run 14–34 (VLIV…FYHG), 142–162 (IFLV…RFKL), 166–186 (IASI…LGVF), 193–213 (YIIV…IIIF), 245–265 (LTSV…EGSI), and 270–290 (LVFM…ASPI).

Belongs to the SecD/SecF family. SecF subfamily. In terms of assembly, forms a complex with SecD. Part of the essential Sec protein translocation apparatus which comprises SecA, SecYEG and auxiliary proteins SecDF. Other proteins may also be involved.

The protein resides in the cell inner membrane. In terms of biological role, part of the Sec protein translocase complex. Interacts with the SecYEG preprotein conducting channel. SecDF uses the proton motive force (PMF) to complete protein translocation after the ATP-dependent function of SecA. The chain is Protein translocase subunit SecF from Borreliella burgdorferi (strain ATCC 35210 / DSM 4680 / CIP 102532 / B31) (Borrelia burgdorferi).